The chain runs to 456 residues: uncharacterized protein (456 aa).

It belongs to the herpesviridae UL49 family.

This is an uncharacterized protein from Equus caballus (Horse).